Consider the following 342-residue polypeptide: Fructose-1,6-bisphosphatase class 1 (342 aa).

Mg(2+)-binding residues include glutamate 91, aspartate 113, leucine 115, and aspartate 116. Residues 116 to 119 (DGSS), asparagine 211, and lysine 277 contribute to the substrate site. Glutamate 283 serves as a coordination point for Mg(2+).

The protein belongs to the FBPase class 1 family. In terms of assembly, homotetramer. Mg(2+) is required as a cofactor.

Its subcellular location is the cytoplasm. The enzyme catalyses beta-D-fructose 1,6-bisphosphate + H2O = beta-D-fructose 6-phosphate + phosphate. It functions in the pathway carbohydrate biosynthesis; gluconeogenesis. The protein is Fructose-1,6-bisphosphatase class 1 of Bordetella petrii (strain ATCC BAA-461 / DSM 12804 / CCUG 43448).